We begin with the raw amino-acid sequence, 423 residues long: Polyglutamylase complex subunit TTLL1 (423 aa).

Residues 1–367 (MAGRVKWVTD…NGEIPDCKWN (367 aa)) form the TTL domain. ATP is bound by residues Lys138, 144–145 (QG), 181–184 (SVYI), and 194–196 (KFD). Gln144 contributes to the a protein binding site. Arg220 is a binding site for L-glutamate. 241-242 (TN) is an ATP binding site. Lys259 serves as a coordination point for L-glutamate. The Mg(2+) site is built by Asp313, Glu326, and Asn328. Residue Lys344 participates in L-glutamate binding. Residues 390-423 (DGAERELRNRPGQPVGPRAGRSRDSGRSVLTTWK) are disordered.

Belongs to the tubulin polyglutamylase family. Part of the neuronal tubulin polyglutamylase complex which contains TPGS1, TPGS2, TTLL1, LRRC49 and NICN1. Interacts with PCM1, CSTPP1 and LRRC49. Mg(2+) serves as cofactor. In terms of tissue distribution, highly expressed in brain, heart and kidney. Expressed in liver, lung, muscle, spleen, testis and trachea. In the brain, expressed in ependymal cilia, cortex, corpus callosum and striatum. Expressed in blastomere.

It localises to the cytoplasm. The protein localises to the cytoskeleton. Its subcellular location is the cilium basal body. It is found in the cilium axoneme. The protein resides in the cell projection. It localises to the cilium. The protein localises to the flagellum. It catalyses the reaction (L-glutamyl)(n)-gamma-L-glutamyl-L-glutamyl-[protein] + L-glutamate + ATP = (L-glutamyl)(n+1)-gamma-L-glutamyl-L-glutamyl-[protein] + ADP + phosphate + H(+). Catalytic subunit of a polyglutamylase complex which modifies tubulin, generating side chains of glutamate on the gamma-carboxyl group of specific glutamate residues within the C-terminal tail of tubulin. Probably involved in the side-chain elongation step of the polyglutamylation reaction rather than the initiation step. Modifies both alpha- and beta-tubulins with a preference for the alpha-tail. Unlike most polyglutamylases of the tubulin--tyrosine ligase family, only displays a catalytic activity when in complex with other proteins as it is most likely lacking domains important for autonomous activity. Part of the neuronal tubulin polyglutamylase complex. Mediates cilia and flagella polyglutamylation which is essential for their biogenesis and motility. Involved in respiratory motile cilia function through the regulation of beating asymmetry. Essential for sperm flagella biogenesis, motility and male fertility. Also mediates glutamylation of non-tubulin proteins. Involved in KLF4 glutamylation which impedes its ubiquitination, thereby leading to somatic cell reprogramming, pluripotency maintenance and embryogenesis. The sequence is that of Polyglutamylase complex subunit TTLL1 from Mus musculus (Mouse).